Consider the following 590-residue polypeptide: Aspartate--tRNA ligase (590 aa).

Glutamate 174 is an L-aspartate binding site. Residues 198–201 (QLMK) form an aspartate region. Position 220 (arginine 220) interacts with L-aspartate. Residues 220 to 222 (RDE) and glutamine 229 contribute to the ATP site. Residue histidine 443 coordinates L-aspartate. Glutamate 484 provides a ligand contact to ATP. Residue arginine 491 participates in L-aspartate binding. 536 to 539 (GLDR) is an ATP binding site.

It belongs to the class-II aminoacyl-tRNA synthetase family. Type 1 subfamily. In terms of assembly, homodimer.

Its subcellular location is the cytoplasm. It catalyses the reaction tRNA(Asp) + L-aspartate + ATP = L-aspartyl-tRNA(Asp) + AMP + diphosphate. In terms of biological role, catalyzes the attachment of L-aspartate to tRNA(Asp) in a two-step reaction: L-aspartate is first activated by ATP to form Asp-AMP and then transferred to the acceptor end of tRNA(Asp). The polypeptide is Aspartate--tRNA ligase (Lactococcus lactis subsp. lactis (strain IL1403) (Streptococcus lactis)).